The chain runs to 1093 residues: ATP-dependent helicase/deoxyribonuclease subunit B (1093 aa).

Belongs to the helicase family. AddB/RexB type 2 subfamily. Heterodimer of AddA and RexB. Requires Mg(2+) as cofactor.

In terms of biological role, the heterodimer acts as both an ATP-dependent DNA helicase and an ATP-dependent, dual-direction single-stranded exonuclease. Recognizes the chi site generating a DNA molecule suitable for the initiation of homologous recombination. This subunit has 5' -&gt; 3' nuclease activity but not helicase activity. The chain is ATP-dependent helicase/deoxyribonuclease subunit B from Streptococcus sanguinis (strain SK36).